The primary structure comprises 513 residues: MEALNSILTGYAVAALSVYALWFYFLSRRLTGPKVLPFVGSLPYLIANRSRIHDWIADNLRATGGTYQTCTMVIPFVAKAQGFYTVTCHPKNVEHILKTRFDNYPKGPMWRAAFHDLLGQGIFNSDGDTWLMQRKTAALEFTTRTLRQAMARWVNGTIKNRLWLILDRAVQNNKPVDLQDLFLRLTFDNICGLTFGKDPETLSLDLPDNPFSVAFDTATEATLKRLLYTGFLWRIQKAMGIGSEDKLKKSLEVVETYMNDAIDARKNSPSDDLLSRFLKKRDVNGNVLPTDVLQRIALNFVLAGRDTSSVALSWFFWLVMNNREVETKIVNELSMVLKETRGNDQEKWTEEPLEFDEADRLVYLKAALAETLRLYPSVPQDFKYVVDDDVLPDGTFVPRGSTVTYSIYSIGRMKTIWGEDCLEFRPERWLTADGERFETPKDGYKFVAFNAGPRTCLGKDLAYNQMKSVASAVLLRYRVFPVPGHRVEQKMSLTLFMKNGLRVYLQPRGEVLA.

A helical membrane pass occupies residues 7-27; sequence ILTGYAVAALSVYALWFYFLS. Position 456 (Cys456) interacts with heme.

Belongs to the cytochrome P450 family. Requires heme as cofactor. Expressed in roots.

The protein localises to the membrane. It catalyses the reaction an omega-methyl-long-chain fatty acid + reduced [NADPH--hemoprotein reductase] + O2 = an omega-hydroxy-long-chain fatty acid + oxidized [NADPH--hemoprotein reductase] + H2O + H(+). Functionally, catalyzes the omega-hydroxylation of various fatty acids (FA). Acts on saturated and unsaturated fatty acids with chain lengths from C12 to C18 but not on hexadecane. The chain is Cytochrome P450 86A1 (CYP86A1) from Arabidopsis thaliana (Mouse-ear cress).